The primary structure comprises 209 residues: Uridine kinase (209 aa).

12 to 19 (GGSGSGKT) serves as a coordination point for ATP.

Belongs to the uridine kinase family.

The protein resides in the cytoplasm. The enzyme catalyses uridine + ATP = UMP + ADP + H(+). The catalysed reaction is cytidine + ATP = CMP + ADP + H(+). Its pathway is pyrimidine metabolism; CTP biosynthesis via salvage pathway; CTP from cytidine: step 1/3. It functions in the pathway pyrimidine metabolism; UMP biosynthesis via salvage pathway; UMP from uridine: step 1/1. This chain is Uridine kinase, found in Listeria monocytogenes serotype 4b (strain CLIP80459).